The primary structure comprises 526 residues: Microphthalmia-associated transcription factor (526 aa).

Ser-5 is subject to Phosphoserine; by MTOR. 2 disordered regions span residues 20–54 (EPKT…STMT) and 155–179 (VLSS…SAPN). The span at 34–44 (SSSSAEHSGAS) shows a compositional bias: low complexity. The residue at position 180 (Ser-180) is a Phosphoserine; by MAPK. Residues 224 to 291 (DDVIDDIISL…PANLPNIKRE (68 aa)) form a transactivation region. Ser-280 is modified (phosphoserine). A Glycyl lysine isopeptide (Lys-Gly) (interchain with G-Cter in SUMO) cross-link involves residue Lys-289. A bHLH domain is found at 311–364 (QKKDNHNLIERRRRFNINDRIKELGTLIPKSNDPDMRWNKGTILKASVDYIRKL). Residues 355 to 401 (KASVDYIRKLQREQQRAKDLENRQKKLEHANRHLLLRVQELEMQARA) are a coiled coil. The segment at 374 to 395 (LENRQKKLEHANRHLLLRVQEL) is leucine-zipper. The interval 401–431 (AHGLSLIPSTGLCSPDLVNRIIKQEPVLENC) is DNA-binding regulation. The residue at position 405 (Ser-405) is a Phosphoserine; by GSK3. Ser-414 carries the phosphoserine modification. A Glycyl lysine isopeptide (Lys-Gly) (interchain with G-Cter in SUMO) cross-link involves residue Lys-423. Position 491 is a phosphoserine (Ser-491). Residues 496-526 (TDPLLSSVSPGASKTSSRRSSMSAEETEHAC) form a disordered region. Residues 507–519 (ASKTSSRRSSMSA) are compositionally biased toward low complexity. Ser-516 is modified (phosphoserine; by RPS6KA1).

Belongs to the MiT/TFE family. Homodimer or heterodimer; dimerization is mediated via the coiled coil region. Efficient DNA binding requires dimerization with another bHLH protein. Binds DNA in the form of homodimer or heterodimer with either TFE3, TFEB or TFEC. Interacts with small GTPases Rag (RagA/RRAGA, RagB/RRAGB, RagC/RRAGC and/or RagD/RRAGD); promoting its recruitment to lysosomal membrane in the presence of nutrients. Interacts with KARS1. Identified in a complex with HINT1 and CTNNB1. Interacts with VSX2. In terms of processing, when nutrients are present, phosphorylation by MTOR at Ser-5 via non-canonical mTORC1 pathway promotes ubiquitination by the SCF(BTRC) complex, followed by degradation. Phosphorylation at Ser-405 significantly enhances the ability to bind the tyrosinase promoter. Phosphorylation by MARK3/cTAK1 at Ser-280 promotes association with 14-3-3/YWHA adapters and retention in the cytosol. Phosphorylated at Ser-180 and Ser-516 following KIT signaling, triggering a short live activation: Phosphorylation at Ser-180 and Ser-516 by MAPK and RPS6KA1, respectively, activate the transcription factor activity but also promote ubiquitination and subsequent degradation by the proteasome. Phosphorylated in response to blue light (415nm). Post-translationally, ubiquitinated by the SCF(BTRC) and SCF(FBXW11) complexes following phosphorylation ar Ser-5 by MTOR, leading to its degradation by the proteasome. Ubiquitinated following phosphorylation at Ser-180, leading to subsequent degradation by the proteasome. Deubiquitinated by USP13, preventing its degradation. As to expression, in the adult, expressed at high levels in the heart, skin, skeletal muscle, intestine, stomach, kidney, ovary, lung, spleen and brain. In the embryo, expressed in developing eye, ear, skin and heart. Isoform M is expressed in melanocytes and also in the embryonic and adult heart while isoform A and isoform H are more widely expressed.

It localises to the nucleus. It is found in the cytoplasm. The protein resides in the lysosome membrane. In terms of biological role, transcription factor that acts as a master regulator of melanocyte survival and differentiation as well as melanosome biogenesis. Binds to M-boxes (5'-TCATGTG-3') and symmetrical DNA sequences (E-boxes) (5'-CACGTG-3') found in the promoter of pigmentation genes, such as tyrosinase (TYR). Involved in the cellular response to amino acid availability by acting downstream of MTOR: in the presence of nutrients, MITF phosphorylation by MTOR promotes its inactivation. Upon starvation or lysosomal stress, inhibition of MTOR induces MITF dephosphorylation, resulting in transcription factor activity. Plays an important role in melanocyte development by regulating the expression of tyrosinase (TYR) and tyrosinase-related protein 1 (TYRP1). Plays a critical role in the differentiation of various cell types, such as neural crest-derived melanocytes, mast cells, osteoclasts and optic cup-derived retinal pigment epithelium. The protein is Microphthalmia-associated transcription factor (Mitf) of Mus musculus (Mouse).